A 246-amino-acid polypeptide reads, in one-letter code: Putative L,D-transpeptidase YafK (246 aa).

Residues 1-19 (MRKIALILAMLLIPCVSFA) form the signal peptide. Residues 44–174 (VYIQIFKEER…GQPSVQVSIY (131 aa)) enclose the L,D-TPase catalytic domain. His135 functions as the Proton donor/acceptor in the catalytic mechanism. Cys143 functions as the Nucleophile in the catalytic mechanism.

Belongs to the YkuD family.

Its pathway is cell wall biogenesis; peptidoglycan biosynthesis. This is Putative L,D-transpeptidase YafK (yafK) from Escherichia coli O157:H7.